We begin with the raw amino-acid sequence, 445 residues long: Argininosuccinate synthase (445 aa).

ATP-binding positions include 17 to 25 (AFSGGLDTS) and alanine 43. Tyrosine 99 contacts L-citrulline. 2 residues coordinate ATP: glycine 129 and threonine 131. 3 residues coordinate L-aspartate: threonine 131, asparagine 135, and aspartate 136. Residue asparagine 135 coordinates L-citrulline. Aspartate 136 contributes to the ATP binding site. L-citrulline is bound by residues arginine 139 and serine 192. Residue aspartate 194 participates in ATP binding. L-citrulline contacts are provided by threonine 201, glutamate 203, and glutamate 280.

The protein belongs to the argininosuccinate synthase family. Type 2 subfamily. As to quaternary structure, homotetramer.

The protein resides in the cytoplasm. The enzyme catalyses L-citrulline + L-aspartate + ATP = 2-(N(omega)-L-arginino)succinate + AMP + diphosphate + H(+). The protein operates within amino-acid biosynthesis; L-arginine biosynthesis; L-arginine from L-ornithine and carbamoyl phosphate: step 2/3. This chain is Argininosuccinate synthase, found in Burkholderia ambifaria (strain ATCC BAA-244 / DSM 16087 / CCUG 44356 / LMG 19182 / AMMD) (Burkholderia cepacia (strain AMMD)).